The following is a 493-amino-acid chain: Galactose-1-phosphate uridylyltransferase (493 aa).

It belongs to the galactose-1-phosphate uridylyltransferase type 2 family.

The protein localises to the cytoplasm. The enzyme catalyses alpha-D-galactose 1-phosphate + UDP-alpha-D-glucose = alpha-D-glucose 1-phosphate + UDP-alpha-D-galactose. Its pathway is carbohydrate metabolism; galactose metabolism. In Streptococcus thermophilus (strain ATCC BAA-250 / LMG 18311), this protein is Galactose-1-phosphate uridylyltransferase.